The chain runs to 396 residues: Phosphoglycerate kinase (396 aa).

Substrate is bound by residues 21 to 23 (DFN), Arg-36, 59 to 62 (HFDR), Arg-118, and Arg-151. Residues Lys-201, Glu-323, and 353-356 (GGDT) contribute to the ATP site.

This sequence belongs to the phosphoglycerate kinase family. Monomer.

Its subcellular location is the cytoplasm. It carries out the reaction (2R)-3-phosphoglycerate + ATP = (2R)-3-phospho-glyceroyl phosphate + ADP. It participates in carbohydrate degradation; glycolysis; pyruvate from D-glyceraldehyde 3-phosphate: step 2/5. This chain is Phosphoglycerate kinase, found in Caulobacter sp. (strain K31).